The primary structure comprises 337 residues: MNTTVATSPITVLGAGSYGTALAIAFSRNGFPTYLWGHDPVHMQRLSEERQNNAFLPNIAFPDALHIEFDLASALSQSRDLLIVVPSHVFGEVIDKIKPYLRPDHRIAWATKGLERNTGRLLQEVIEEKLGTQHPLAVLSGPTFAKELAAGLPTAIALASNNEQFALEFQARIHCSKHFRVYINQDMIGVQLGGAIKNVIAISAGMSDGMGFGANARTALITRGIAEISRLGASLGANPNTFMGMSGLGDLVLTCTDDQSRNRRFGIMLGQGFSAQTAMDNIGQVVEGFYNAKEAYLLAQRQGIEMPITEQVYQVLFCGKNAQDVAASLLGRERKGE.

Residues serine 17, tyrosine 18, histidine 38, and lysine 112 each contribute to the NADPH site. Sn-glycerol 3-phosphate is bound by residues lysine 112, glycine 141, and threonine 143. Alanine 145 contacts NADPH. Lysine 197, aspartate 250, serine 260, arginine 261, and asparagine 262 together coordinate sn-glycerol 3-phosphate. Catalysis depends on lysine 197, which acts as the Proton acceptor. NADPH is bound at residue arginine 261. Residues valine 285 and glutamate 287 each contribute to the NADPH site.

Belongs to the NAD-dependent glycerol-3-phosphate dehydrogenase family.

The protein localises to the cytoplasm. It carries out the reaction sn-glycerol 3-phosphate + NAD(+) = dihydroxyacetone phosphate + NADH + H(+). The enzyme catalyses sn-glycerol 3-phosphate + NADP(+) = dihydroxyacetone phosphate + NADPH + H(+). It participates in membrane lipid metabolism; glycerophospholipid metabolism. Catalyzes the reduction of the glycolytic intermediate dihydroxyacetone phosphate (DHAP) to sn-glycerol 3-phosphate (G3P), the key precursor for phospholipid synthesis. In Pasteurella multocida (strain Pm70), this protein is Glycerol-3-phosphate dehydrogenase [NAD(P)+].